Here is a 478-residue protein sequence, read N- to C-terminus: Secretogranin-3 (478 aa).

The signal sequence occupies residues 1–21 (MASKRLGFVVVLALVCQHINA). Disordered stretches follow at residues 22 to 126 (FPTP…NGMD) and 208 to 287 (IGDR…EDGL). Basic and acidic residues predominate over residues 28-42 (PDDKYNRELTEEKPL). Positions 63–74 (AEEETNSEDDDI) are enriched in acidic residues. A compositionally biased stretch (basic and acidic residues) spans 97–120 (ANERLGADDTDSTKNRRLADDYDS). Residues 235–259 (DEEDEVENEGGDDANGDEPQEEESR) show a composition bias toward acidic residues.

It is found in the cytoplasmic vesicle. The protein resides in the secretory vesicle lumen. The protein localises to the secretory vesicle membrane. It localises to the secreted. The polypeptide is Secretogranin-3 (scg3) (Danio rerio (Zebrafish)).